The sequence spans 252 residues: Acyl-coenzyme A diphosphatase FITM2 (252 aa).

At 1–25 (MAAAVAGSLVDKLVCLWRQPYTRIY) the chain is on the cytoplasmic side. The helical transmembrane segment at 26–46 (LPHLFFCISLVGSVLKNAELV) threads the bilayer. The Lumenal segment spans residues 47–59 (PESYFSSSRNVLN). The helical transmembrane segment at 60–80 (LYFVKVSWGWTIVLLLPFIAY) threads the bilayer. The Cytoplasmic portion of the chain corresponds to 81 to 94 (SNFYIKSHMFALRR). The chain crosses the membrane as a helical span at residues 95 to 115 (LTSLLVATLVWYICTETFFYI). Topologically, residues 116–156 (EDITGSCYESNTMVVIRGEFDTKAACRKAGFFWDGFDISGH) are lumenal. The active site involves His156. The helical transmembrane segment at 157-177 (SFILSYSSLVIMEEMVPMLHI) threads the bilayer. Residues 178 to 190 (QPAYRNPPLDCLY) are Cytoplasmic-facing. A helical membrane pass occupies residues 191–211 (LALNVIVAIWIWMFGCTSVYF). The active site involves His212. Over 212 to 223 (HDIIDKILGTSC) the chain is Lumenal. Residues 224–244 (GILGWYMTYKVWYVKLFSPGL) form a helical membrane-spanning segment. Residues 245–252 (PPQPKQHT) are Cytoplasmic-facing.

This sequence belongs to the FIT family. FIT2 subfamily. Widely expressed.

Its subcellular location is the endoplasmic reticulum membrane. The enzyme catalyses an acyl-CoA + H2O = an acyl-4'-phosphopantetheine + adenosine 3',5'-bisphosphate + 2 H(+). Functionally, fatty acyl-coenzyme A (CoA) diphosphatase that hydrolyzes fatty acyl-CoA to yield acyl-4'-phosphopantetheine and adenosine 3',5'-bisphosphate. Preferentially hydrolyzes unsaturated long-chain acyl-CoA substrates in the endoplasmic reticulum (ER) lumen. This catalytic activity is required for maintaining ER structure and for lipid droplets (LDs) biogenesis, which are lipid storage organelles involved in maintaining lipid and energy homeostasis. Required for lipid droplet accumulation in liver and intestine during embryogenesis. May directly bind to diacylglycerol (DAGs) and triacylglycerol, which is also important for LD biogenesis. May support directional budding of nacent LDs from the ER into the cytosol by reducing DAG levels at sites of LD formation. May play a role in the regulation of cell morphology, ER morphology and cytoskeletal organization. The sequence is that of Acyl-coenzyme A diphosphatase FITM2 from Danio rerio (Zebrafish).